The chain runs to 554 residues: L-ascorbate oxidase homolog (554 aa).

The signal sequence occupies residues 1–21 (MGSGKVTFVALLLCLSVGVIA). Plastocyanin-like domains lie at 22–143 (EDPY…LNVH) and 196–296 (SAKV…AIIR). Asparagine 31, asparagine 59, and asparagine 108 each carry an N-linked (GlcNAc...) asparagine glycan. Cysteines 101 and 540 form a disulfide. 3 N-linked (GlcNAc...) asparagine glycosylation sites follow: asparagine 332, asparagine 352, and asparagine 423. The region spanning 411–521 (DPSKLTIATN…LGEQLYFSVL (111 aa)) is the Plastocyanin-like 3 domain.

It belongs to the multicopper oxidase family. As to expression, pollen.

The protein resides in the secreted. The protein localises to the extracellular space. Its function is as follows. Probable oxidoreductase that may be involved in pollen tube growth. This is L-ascorbate oxidase homolog from Nicotiana tabacum (Common tobacco).